The following is a 184-amino-acid chain: ATP synthase subunit b, chloroplastic (184 aa).

Residues 27-49 traverse the membrane as a helical segment; it reads LATNPINLSVVLGVLIFFGKGVL.

The protein belongs to the ATPase B chain family. F-type ATPases have 2 components, F(1) - the catalytic core - and F(0) - the membrane proton channel. F(1) has five subunits: alpha(3), beta(3), gamma(1), delta(1), epsilon(1). F(0) has four main subunits: a(1), b(1), b'(1) and c(10-14). The alpha and beta chains form an alternating ring which encloses part of the gamma chain. F(1) is attached to F(0) by a central stalk formed by the gamma and epsilon chains, while a peripheral stalk is formed by the delta, b and b' chains.

The protein resides in the plastid. It localises to the chloroplast thylakoid membrane. In terms of biological role, f(1)F(0) ATP synthase produces ATP from ADP in the presence of a proton or sodium gradient. F-type ATPases consist of two structural domains, F(1) containing the extramembraneous catalytic core and F(0) containing the membrane proton channel, linked together by a central stalk and a peripheral stalk. During catalysis, ATP synthesis in the catalytic domain of F(1) is coupled via a rotary mechanism of the central stalk subunits to proton translocation. Component of the F(0) channel, it forms part of the peripheral stalk, linking F(1) to F(0). This chain is ATP synthase subunit b, chloroplastic, found in Pelargonium hortorum (Common geranium).